The sequence spans 631 residues: Coiled-coil domain-containing protein 93 (631 aa).

Disordered stretches follow at residues 1 to 23 (MGLP…DEEQ) and 214 to 243 (QSKM…HEED). Positions 1 to 430 (MGLPRGPEGQ…LKAERAPRGD (430 aa)) are sufficient for interaction with CCDC22. The span at 215–225 (SKMEKAEDKKT) shows a compositional bias: basic and acidic residues. Phosphoserine occurs at positions 298, 301, and 305. Residues 309–631 (LGTSQLHRRK…LLSKVKAKAS (323 aa)) are a coiled coil. Residues 421 to 433 (LKAERAPRGDEKT) are compositionally biased toward basic and acidic residues. The segment at 421–447 (LKAERAPRGDEKTLSSGEPPGTLTSAM) is disordered. The segment at 448 to 631 (THDEDLDRRY…LLSKVKAKAS (184 aa)) is sufficient for interaction with WASHC2C.

Belongs to the CCDC93 family. Component of the commander complex consisting of the CCC subcomplex and the retriever subcomplex. Component of the CCC (COMMD/CCDC22/CCDC93) subcomplex consisting of COMMD1, COMMD2, COMMD3, COMMD4, COMMD5, COMMD6, COMMD7, COMMD8, COMMD9, COMMD10, CCDC22 and CCDC93. Forms a coiled-coil heterodimer with CCDC22; this heterodimer interacts with the guanine nucleotide exchange factor DENND10; the interaction is direct. Interacts with WASHC1. Interacts directly with WASHC2C. Interacts with SNX17 and SNX31.

The protein localises to the early endosome. Component of the commander complex that is essential for endosomal recycling of transmembrane cargos; the commander complex is composed of composed of the CCC subcomplex and the retriever subcomplex. Component of the CCC complex, which is involved in the regulation of endosomal recycling of surface proteins, including integrins, signaling receptor and channels. The CCC complex associates with SNX17, retriever and WASH complexes to prevent lysosomal degradation and promote cell surface recycling of numerous cargos such as integrins ITGA5:ITGB1. Involved in copper-dependent ATP7A trafficking between the trans-Golgi network and vesicles in the cell periphery; the function is proposed to depend on its association within the CCC complex and cooperation with the WASH complex on early endosomes and is dependent on its interaction with WASHC2C. Its function is as follows. (Microbial infection) The CCC complex, in collaboration with the heterotrimeric retriever complex, mediates the exit of human papillomavirus to the cell surface. The sequence is that of Coiled-coil domain-containing protein 93 (CCDC93) from Homo sapiens (Human).